The chain runs to 133 residues: Ribonuclease P protein component (133 aa).

This sequence belongs to the RnpA family. Consists of a catalytic RNA component (M1 or rnpB) and a protein subunit.

It carries out the reaction Endonucleolytic cleavage of RNA, removing 5'-extranucleotides from tRNA precursor.. Its function is as follows. RNaseP catalyzes the removal of the 5'-leader sequence from pre-tRNA to produce the mature 5'-terminus. It can also cleave other RNA substrates such as 4.5S RNA. The protein component plays an auxiliary but essential role in vivo by binding to the 5'-leader sequence and broadening the substrate specificity of the ribozyme. This is Ribonuclease P protein component from Pseudomonas fluorescens (strain Pf0-1).